A 1407-amino-acid polypeptide reads, in one-letter code: DNA-directed RNA polymerase subunit beta' (1407 aa).

Zn(2+) contacts are provided by C70, C72, C85, and C88. D460, D462, and D464 together coordinate Mg(2+). Zn(2+) is bound by residues C814, C888, C895, and C898. K972 is subject to N6-acetyllysine.

It belongs to the RNA polymerase beta' chain family. The RNAP catalytic core consists of 2 alpha, 1 beta, 1 beta' and 1 omega subunit. When a sigma factor is associated with the core the holoenzyme is formed, which can initiate transcription. It depends on Mg(2+) as a cofactor. Zn(2+) is required as a cofactor.

It carries out the reaction RNA(n) + a ribonucleoside 5'-triphosphate = RNA(n+1) + diphosphate. Its function is as follows. DNA-dependent RNA polymerase catalyzes the transcription of DNA into RNA using the four ribonucleoside triphosphates as substrates. The sequence is that of DNA-directed RNA polymerase subunit beta' from Shigella flexneri serotype 5b (strain 8401).